A 495-amino-acid chain; its full sequence is Ectonucleoside triphosphate diphosphohydrolase 8 (495 aa).

The Cytoplasmic segment spans residues 1–8; that stretch reads MGLTWKQR. A helical membrane pass occupies residues 9–29; it reads VFTALLGAAAVSGLTALLLVL. At 30–466 the chain is on the extracellular side; sequence VGTMNVLLPP…PAQGWAQSFG (437 aa). Residues Cys-78 and Cys-102 are joined by a disulfide bond. The active-site Proton acceptor is Glu-168. Cys-246 and Cys-292 are disulfide-bonded. Residues Asn-303 and Asn-324 are each glycosylated (N-linked (GlcNAc...) asparagine). 2 cysteine pairs are disulfide-bonded: Cys-328-Cys-334 and Cys-380-Cys-403. A helical membrane pass occupies residues 467 to 487; that stretch reads VWAAGVVFVVLTLAATLGAVA. Residues 488–495 lie on the Cytoplasmic side of the membrane; that stretch reads VQVFWLQD.

This sequence belongs to the GDA1/CD39 NTPase family. It depends on Ca(2+) as a cofactor. The cofactor is Mg(2+). N-glycosylated.

The protein localises to the cell membrane. The enzyme catalyses a ribonucleoside 5'-triphosphate + 2 H2O = a ribonucleoside 5'-phosphate + 2 phosphate + 2 H(+). Its function is as follows. Canalicular ectonucleoside NTPDase responsible for the main hepatic NTPDase activity. Ectonucleoside NTPDases catalyze the hydrolysis of gamma- and beta-phosphate residues of nucleotides, playing a central role in concentration of extracellular nucleotides. Has activity toward ATP, ADP, UTP and UDP, but not toward AMP. The polypeptide is Ectonucleoside triphosphate diphosphohydrolase 8 (ENTPD8) (Bos taurus (Bovine)).